The sequence spans 83 residues: Retinal cone rhodopsin-sensitive cGMP 3',5'-cyclic phosphodiesterase subunit gamma (83 aa).

Positions 1–51 (MSDSPCLSPPAPSQGPTTPRKGPPKFKQRQTRQFKSKPPKKGVKGFGDDIP) are disordered. Over residues 22-43 (GPPKFKQRQTRQFKSKPPKKGV) the composition is skewed to basic residues.

It belongs to the rod/cone cGMP-PDE gamma subunit family. Tetramer composed of two catalytic chains (alpha and beta), and two inhibitory chains (gamma).

It catalyses the reaction 3',5'-cyclic GMP + H2O = GMP + H(+). Participates in processes of transmission and amplification of the visual signal. cGMP-PDEs are the effector molecules in G-protein-mediated phototransduction in vertebrate rods and cones. The polypeptide is Retinal cone rhodopsin-sensitive cGMP 3',5'-cyclic phosphodiesterase subunit gamma (Pde6h) (Rattus norvegicus (Rat)).